The following is a 511-amino-acid chain: Bifunctional purine biosynthesis protein PurH (511 aa).

In terms of domain architecture, MGS-like spans 1–144 (MKTALLSVSD…KNFASVLPVV (144 aa)).

This sequence belongs to the PurH family.

The enzyme catalyses (6R)-10-formyltetrahydrofolate + 5-amino-1-(5-phospho-beta-D-ribosyl)imidazole-4-carboxamide = 5-formamido-1-(5-phospho-D-ribosyl)imidazole-4-carboxamide + (6S)-5,6,7,8-tetrahydrofolate. It catalyses the reaction IMP + H2O = 5-formamido-1-(5-phospho-D-ribosyl)imidazole-4-carboxamide. The protein operates within purine metabolism; IMP biosynthesis via de novo pathway; 5-formamido-1-(5-phospho-D-ribosyl)imidazole-4-carboxamide from 5-amino-1-(5-phospho-D-ribosyl)imidazole-4-carboxamide (10-formyl THF route): step 1/1. It participates in purine metabolism; IMP biosynthesis via de novo pathway; IMP from 5-formamido-1-(5-phospho-D-ribosyl)imidazole-4-carboxamide: step 1/1. In Pediococcus pentosaceus (strain ATCC 25745 / CCUG 21536 / LMG 10740 / 183-1w), this protein is Bifunctional purine biosynthesis protein PurH.